A 343-amino-acid chain; its full sequence is Plasminogen (343 aa).

Kringle domains lie at Ala-1–Leu-17 and Ala-41–Ala-120. Positions Ala-1 to Cys-140 are plasmin heavy chain A. Disulfide bonds link Cys-15/Cys-94, Cys-36/Cys-77, and Cys-65/Cys-89. One can recognise a Peptidase S1 domain in the interval Val-114–Arg-341. A Phosphoserine modification is found at Ser-130. A disulfide bridge links Cys-140 with Cys-156. The tract at residues Gly-141–Tyr-343 is plasmin light chain B. Active-site charge relay system residues include His-155 and Asp-198. Ser-221 bears the Phosphoserine mark. 3 disulfide bridges follow: Cys-232-Cys-299, Cys-262-Cys-278, and Cys-289-Cys-317. Ser-293 (charge relay system) is an active-site residue.

Belongs to the peptidase S1 family. Plasminogen subfamily. Interacts with CSPG4 and AMOT. Interacts (via the Kringle domains) with HRG; the interaction tethers PLG to the cell surface and enhances its activation. Interacts (via Kringle 4 domain) with ADA; the interaction stimulates PLG activation when in complex with DPP4. Angiostatin: Interacts with ATP5F1A; the interaction inhibits most of the angiogenic effects of angiostatin.

It localises to the secreted. It catalyses the reaction Preferential cleavage: Lys-|-Xaa &gt; Arg-|-Xaa, higher selectivity than trypsin. Converts fibrin into soluble products.. Its activity is regulated as follows. Converted into plasmin by plasminogen activators, both plasminogen and its activator being bound to fibrin. Cannot be activated with streptokinase. Plasmin dissolves the fibrin of blood clots and acts as a proteolytic factor in a variety of other processes including embryonic development, tissue remodeling, tumor invasion, and inflammation. In ovulation, weakens the walls of the Graafian follicle. It activates the urokinase-type plasminogen activator, collagenases and several complement zymogens, such as C1, C4 and C5. Cleavage of fibronectin and laminin leads to cell detachment and apoptosis. Also cleaves fibrin, thrombospondin and von Willebrand factor. Its role in tissue remodeling and tumor invasion may be modulated by CSPG4. Binds to cells. This Ovis aries (Sheep) protein is Plasminogen (PLG).